A 501-amino-acid polypeptide reads, in one-letter code: Ectoine/hydroxyectoine transporter (501 aa).

12 consecutive transmembrane segments (helical) span residues 9–29, 45–65, 86–106, 137–157, 190–210, 220–240, 258–278, 311–331, 343–363, 395–415, 441–461, and 465–485; these read PVFYVSAFVVFLLVIIGATLP, IHFGWFYLLAVFVFVVFLITL, FFTWIGMLFSAGFGAGLVFWG, AFFHWGVSQWSVFAIVGLVIA, LAVIATVMGVATSLGLGILQM, VPTSIWVQMAIAGVMLITYLI, LGSLFIIIVFVFMAGPTVFIL, WTIFYWAWSTAWSPFVGAFIA, VLGVLVVSPAIACIWIAAFGG, LPMTTILSILSIFLIFTFLVT, IVWGLLITAIAVVLLLAGGLE, and TASLISALPFTVILLLMMASF.

Belongs to the BCCT transporter (TC 2.A.15) family.

The protein localises to the cell inner membrane. In terms of biological role, mediates the import of ectoine and hydroxyectoine, which function as osmotic and cold stress protectants. Also has minor uptake activities for the compatible solutes proline and glycine betaine. The polypeptide is Ectoine/hydroxyectoine transporter (Virgibacillus pantothenticus).